A 339-amino-acid chain; its full sequence is UPF0324 membrane protein CPE0129 (339 aa).

The next 8 membrane-spanning stretches (helical) occupy residues 12–30, 35–54, 90–112, 122–144, 156–178, 210–232, 259–281, and 316–338; these read ILPG…EFLG, TIGA…NTLF, LGFN…TYFI, YSLL…VSPV, ITIV…SILY, VVEL…VLVF, WFII…GILG, and MLYG…NIFI.

Belongs to the UPF0324 family.

Its subcellular location is the cell membrane. The protein is UPF0324 membrane protein CPE0129 of Clostridium perfringens (strain 13 / Type A).